Reading from the N-terminus, the 470-residue chain is mRNA export factor ICP27 homolog (470 aa).

Disordered stretches follow at residues 1–31 (MALSSVSSCEPMEDEMSIMGSDTEDNFTGGD) and 73–202 (FSAS…AGDR). Residues 73–85 (FSASPQRAQPSNP) are compositionally biased toward polar residues. 2 stretches are compositionally biased toward basic residues: residues 94 to 107 (HGRRNRRRPFRRNN) and 178 to 187 (RVHRNRRRGN). 4 residues coordinate Zn(2+): Cys-359, His-437, Cys-441, and Cys-446. A CHC2-type zinc finger spans residues 359 to 446 (CYLSSSGSPT…HKRRCKADTC (88 aa)).

Belongs to the HHV-1 ICP27 protein family. As to quaternary structure, homodimer. Homodimerization is required for transactivation. Associates in a complex with RNA, and host export factors NXF1/TAP and ALYREF; these interactions allow nuclear export of viral transcripts. Interacts with three host shuttling SR proteins SRSF1, SRSF3 and SRSF7. Interacts with host SRPK1. Interacts with IE62; this interaction enhances IE62 transactivation.

It is found in the host cytoplasm. Its subcellular location is the host nucleus. Its function is as follows. Multifunctional regulator of the expression of viral genes that mediates nuclear export of viral intronless mRNAs. This immediate early (EI) protein promotes the nuclear export of viral intronless mRNAs by interacting with mRNAs and host NXF1/TAP. The protein is mRNA export factor ICP27 homolog of Equine herpesvirus 1 (strain Kentucky A) (EHV-1).